The primary structure comprises 173 residues: DRBM domain-containing protein 340R (173 aa).

The DRBM domain maps to 30–102 (NSIGFLNEFC…AFKTIKELNL (73 aa)).

The chain is DRBM domain-containing protein 340R from Invertebrate iridescent virus 6 (IIV-6).